An 896-amino-acid chain; its full sequence is Translation initiation factor IF-2 (896 aa).

The segment at 32–306 is disordered; sequence LAQAGSSDTK…HKTKKQSEEH (275 aa). Composition is skewed to polar residues over residues 35 to 48 and 114 to 126; these read AGSS…VSKA and ADST…SSQE. A compositionally biased stretch (basic and acidic residues) spans 156–170; it reads ARNEETPIIRTRTEP. A compositionally biased stretch (polar residues) spans 213–237; sequence QQTRPSVETASTKQQQPSGTNTRPA. Basic and acidic residues predominate over residues 256–280; the sequence is RGPDRDRTKRSDENVKAFTGRDRYG. The tr-type G domain occupies 401-570; that stretch reads IRSPIVAFMG…ALQAEVLELK (170 aa). The segment at 410-417 is G1; the sequence is GHVDHGKT. 410–417 is a binding site for GTP; sequence GHVDHGKT. The tract at residues 435 to 439 is G2; the sequence is AITQH. The interval 456 to 459 is G3; it reads DTPG. GTP-binding positions include 456–460 and 510–513; these read DTPGH and NKCD. A G4 region spans residues 510–513; that stretch reads NKCD. A G5 region spans residues 546 to 548; that stretch reads SAK.

This sequence belongs to the TRAFAC class translation factor GTPase superfamily. Classic translation factor GTPase family. IF-2 subfamily.

It localises to the cytoplasm. In terms of biological role, one of the essential components for the initiation of protein synthesis. Protects formylmethionyl-tRNA from spontaneous hydrolysis and promotes its binding to the 30S ribosomal subunits. Also involved in the hydrolysis of GTP during the formation of the 70S ribosomal complex. The sequence is that of Translation initiation factor IF-2 (infB) from Chlamydia muridarum (strain MoPn / Nigg).